Consider the following 194-residue polypeptide: dITP/XTP pyrophosphatase (194 aa).

8–13 (TNNPHK) contributes to the substrate binding site. D69 functions as the Proton acceptor in the catalytic mechanism. Position 69 (D69) interacts with Mg(2+). Residues T70, 150-153 (FGYD), K173, and 178-179 (HR) contribute to the substrate site.

It belongs to the HAM1 NTPase family. Homodimer. Mg(2+) is required as a cofactor.

It catalyses the reaction XTP + H2O = XMP + diphosphate + H(+). The enzyme catalyses dITP + H2O = dIMP + diphosphate + H(+). It carries out the reaction ITP + H2O = IMP + diphosphate + H(+). Pyrophosphatase that catalyzes the hydrolysis of nucleoside triphosphates to their monophosphate derivatives, with a high preference for the non-canonical purine nucleotides XTP (xanthosine triphosphate), dITP (deoxyinosine triphosphate) and ITP. Seems to function as a house-cleaning enzyme that removes non-canonical purine nucleotides from the nucleotide pool, thus preventing their incorporation into DNA/RNA and avoiding chromosomal lesions. The protein is dITP/XTP pyrophosphatase of Porphyromonas gingivalis (strain ATCC BAA-308 / W83).